The chain runs to 208 residues: Small ribosomal subunit protein uS4 (208 aa).

In terms of domain architecture, S4 RNA-binding spans 98–163 (RRLDNVVYRL…KPRFIEIKEK (66 aa)).

The protein belongs to the universal ribosomal protein uS4 family. Part of the 30S ribosomal subunit. Contacts protein S5. The interaction surface between S4 and S5 is involved in control of translational fidelity.

One of the primary rRNA binding proteins, it binds directly to 16S rRNA where it nucleates assembly of the body of the 30S subunit. In terms of biological role, with S5 and S12 plays an important role in translational accuracy. This chain is Small ribosomal subunit protein uS4, found in Caldicellulosiruptor saccharolyticus (strain ATCC 43494 / DSM 8903 / Tp8T 6331).